Reading from the N-terminus, the 140-residue chain is Cytochrome b (140 aa).

The chain crosses the membrane as a helical span at residues F38–I58. The heme b site is built by H42 and H56. An a ubiquinone-binding site is contributed by H61. Residues F85–F105 traverse the membrane as a helical segment.

The protein belongs to the cytochrome b family. As to quaternary structure, fungal cytochrome b-c1 complex contains 10 subunits; 3 respiratory subunits, 2 core proteins and 5 low-molecular weight proteins. Cytochrome b-c1 complex is a homodimer. Heme b serves as cofactor.

The protein resides in the mitochondrion inner membrane. Functionally, component of the ubiquinol-cytochrome c reductase complex (complex III or cytochrome b-c1 complex) that is part of the mitochondrial respiratory chain. The b-c1 complex mediates electron transfer from ubiquinol to cytochrome c. Contributes to the generation of a proton gradient across the mitochondrial membrane that is then used for ATP synthesis. This Aspergillus terreus protein is Cytochrome b (cob).